Here is a 150-residue protein sequence, read N- to C-terminus: Large ribosomal subunit protein bL9 (150 aa).

This sequence belongs to the bacterial ribosomal protein bL9 family.

Functionally, binds to the 23S rRNA. The chain is Large ribosomal subunit protein bL9 from Leuconostoc mesenteroides subsp. mesenteroides (strain ATCC 8293 / DSM 20343 / BCRC 11652 / CCM 1803 / JCM 6124 / NCDO 523 / NBRC 100496 / NCIMB 8023 / NCTC 12954 / NRRL B-1118 / 37Y).